The following is a 399-amino-acid chain: Developmentally-regulated G-protein 1 (399 aa).

In terms of domain architecture, OBG-type G spans 63-288 (GRVALIGFPS…LLARMWDEMG (226 aa)). GTP contacts are provided by residues 69-76 (GFPSVGKS), 115-119 (DLPGI), and 246-249 (NKID). The 79-residue stretch at 288-366 (GLVRVYSKPQ…EDEDVVQIVK (79 aa)) folds into the TGS domain. The disordered stretch occupies residues 367–399 (KKERDEGGRGRFKSHSNAPARIADREKKAPLKQ). Positions 388–399 (IADREKKAPLKQ) are enriched in basic and acidic residues.

Belongs to the TRAFAC class OBG-HflX-like GTPase superfamily. OBG GTPase family. In terms of tissue distribution, expressed in actively growing tissues and reproductive organs. Mostly expressed in leaves, stems and siliques. Also present in flowers and flower buds, and, to a lower extent, in roots.

It is found in the cytoplasmic vesicle. Its subcellular location is the cytoplasm. Its function is as follows. Binds GDP and GTP, and has low GTPase activity. May interact with phosphatidic acid (PA). The chain is Developmentally-regulated G-protein 1 (DRG1) from Arabidopsis thaliana (Mouse-ear cress).